Consider the following 297-residue polypeptide: Quinate/shikimate dehydrogenase (297 aa).

Residues lysine 80 and aspartate 116 each coordinate substrate. Residues alanine 141 to alanine 144, asparagine 164 to aspartate 167, lysine 214, cysteine 241 to asparagine 244, and glycine 264 each bind NAD(+).

This sequence belongs to the shikimate dehydrogenase family. In terms of assembly, homodimer.

It catalyses the reaction L-quinate + NAD(+) = 3-dehydroquinate + NADH + H(+). The catalysed reaction is L-quinate + NADP(+) = 3-dehydroquinate + NADPH + H(+). It carries out the reaction shikimate + NADP(+) = 3-dehydroshikimate + NADPH + H(+). The enzyme catalyses shikimate + NAD(+) = 3-dehydroshikimate + NADH + H(+). Its pathway is metabolic intermediate biosynthesis; chorismate biosynthesis; chorismate from D-erythrose 4-phosphate and phosphoenolpyruvate: step 4/7. The actual biological function of YdiB remains unclear, nor is it known whether 3-dehydroshikimate or quinate represents the natural substrate. Catalyzes the reversible NAD-dependent reduction of both 3-dehydroshikimate (DHSA) and 3-dehydroquinate to yield shikimate (SA) and quinate, respectively. It can use both NAD or NADP for catalysis, however it has higher catalytic efficiency with NAD. The polypeptide is Quinate/shikimate dehydrogenase (Shigella dysenteriae serotype 1 (strain Sd197)).